Reading from the N-terminus, the 265-residue chain is Protein IL-40 (265 aa).

The first 20 residues, 1 to 20 (MGLPGLFCLAVLAASSFSKA), serve as a signal peptide directing secretion. N86 and N132 each carry an N-linked (GlcNAc...) asparagine glycan.

Expressed in fetal liver and bone marrow. Expressed in peripheral blood lymphocyte B cells.

Its subcellular location is the secreted. Its function is as follows. Probable B cell-associated cytokine that plays a role in the regulation of humoral immune responses. Involved in lymphocyte B cell development and immunoglobulin/IgA production. The sequence is that of Protein IL-40 from Homo sapiens (Human).